Consider the following 403-residue polypeptide: Imidazolonepropionase (403 aa).

Fe(3+) is bound by residues histidine 68 and histidine 70. Zn(2+) contacts are provided by histidine 68 and histidine 70. Arginine 77, tyrosine 140, and histidine 173 together coordinate 4-imidazolone-5-propanoate. Tyrosine 140 is an N-formimidoyl-L-glutamate binding site. Histidine 238 contacts Fe(3+). Histidine 238 provides a ligand contact to Zn(2+). Position 241 (glutamine 241) interacts with 4-imidazolone-5-propanoate. Residue aspartate 313 coordinates Fe(3+). Position 313 (aspartate 313) interacts with Zn(2+). 2 residues coordinate N-formimidoyl-L-glutamate: asparagine 315 and glycine 317. Threonine 318 is a 4-imidazolone-5-propanoate binding site.

Belongs to the metallo-dependent hydrolases superfamily. HutI family. Requires Zn(2+) as cofactor. The cofactor is Fe(3+).

The protein resides in the cytoplasm. It carries out the reaction 4-imidazolone-5-propanoate + H2O = N-formimidoyl-L-glutamate. It functions in the pathway amino-acid degradation; L-histidine degradation into L-glutamate; N-formimidoyl-L-glutamate from L-histidine: step 3/3. Its function is as follows. Catalyzes the hydrolytic cleavage of the carbon-nitrogen bond in imidazolone-5-propanoate to yield N-formimidoyl-L-glutamate. It is the third step in the universal histidine degradation pathway. The chain is Imidazolonepropionase from Psychromonas ingrahamii (strain DSM 17664 / CCUG 51855 / 37).